Here is a 213-residue protein sequence, read N- to C-terminus: Protein-L-isoaspartate O-methyltransferase 1 (213 aa).

Ser64 is a catalytic residue.

It belongs to the methyltransferase superfamily. L-isoaspartyl/D-aspartyl protein methyltransferase family.

The protein localises to the cytoplasm. The enzyme catalyses [protein]-L-isoaspartate + S-adenosyl-L-methionine = [protein]-L-isoaspartate alpha-methyl ester + S-adenosyl-L-homocysteine. Functionally, catalyzes the methyl esterification of L-isoaspartyl residues in peptides and proteins that result from spontaneous decomposition of normal L-aspartyl and L-asparaginyl residues. It plays a role in the repair and/or degradation of damaged proteins. The protein is Protein-L-isoaspartate O-methyltransferase 1 of Nitrosococcus oceani (strain ATCC 19707 / BCRC 17464 / JCM 30415 / NCIMB 11848 / C-107).